A 369-amino-acid polypeptide reads, in one-letter code: Somatostatin receptor type 2 (369 aa).

The Extracellular segment spans residues 1 to 43 (MEMSSEQLNGSQVWVSSPFDLNGSLGPSNGSNQTEPYYDMTSN). 4 N-linked (GlcNAc...) asparagine glycosylation sites follow: N9, N22, N29, and N32. The chain crosses the membrane as a helical span at residues 44-67 (AVLTFIYFVVCVVGLCGNTLVIYV). At 68–78 (ILRYAKMKTIT) the chain is on the cytoplasmic side. Residues 79–103 (NIYILNLAIADELFMLGLPFLAMQV) form a helical membrane-spanning segment. The Extracellular portion of the chain corresponds to 104–118 (ALVHWPFGKAICRVV). C115 and C193 are disulfide-bonded. A helical membrane pass occupies residues 119–138 (MTVDGINQFTSIFCLTVMSI). Topologically, residues 139–161 (DRYLAVVHPIKSAKWRRPRTAKM) are cytoplasmic. The chain crosses the membrane as a helical span at residues 162–181 (INVAVWCVSLLVILPIMIYA). The Extracellular portion of the chain corresponds to 182 to 207 (GLRSNQWGRSSCTINWPGESGAWYTG). Residues 208–229 (FIIYAFILGFLVPLTIICLCYL) form a helical membrane-spanning segment. Topologically, residues 230–253 (FIIIKVKSSGIRVGSSKRKKSEKK) are cytoplasmic. Residues 254–278 (VTRMVSIVVAVFIFCWLPFYIFNVS) traverse the membrane as a helical segment. At 279-288 (SVSVAISPTP) the chain is on the extracellular side. The chain crosses the membrane as a helical span at residues 289 to 303 (ALKGMFDFVVILTYA). Topologically, residues 304 to 369 (NSCANPILYA…LLNGDLQTSI (66 aa)) are cytoplasmic. C328 carries S-palmitoyl cysteine lipidation. Phosphoserine occurs at positions 341, 343, and 348. Phosphothreonine occurs at positions 353 and 354.

Belongs to the G-protein coupled receptor 1 family. As to quaternary structure, homodimer and heterodimer with SSTR3 and SSTR5. Heterodimerization with SSTR3 inactivates SSTR3 receptor function. Heterodimerization with SSTR5 is enhanced by agonist stimulation of SSTR2 and increases SSTR2 cell growth inhibition activity. Following agonist stimulation, homodimers dissociate into monomers which is required for receptor internalization. Interacts with beta-arrestin; this interaction is necessary for receptor internalization and is destabilized by heterodimerization with SSTR5 which results in increased recycling of SSTR2 to the cell surface. Interacts (via C-terminus) with SHANK1 (via PDZ domain). In terms of processing, phosphorylated on serine and threonine residues in response to agonist stimulation, leading to receptor desensitization and rapid internalization. Phosphorylated to a greater extent on serine than threonine residues. Threonine phosphorylation is required for arrestin binding and receptor endocytosis but is not necessary for desensitization. As to expression, cerebrum and kidney.

The protein resides in the cell membrane. It localises to the cytoplasm. Functionally, receptor for somatostatin-14 and -28. This receptor is coupled via pertussis toxin sensitive G proteins to inhibition of adenylyl cyclase. In addition it stimulates phosphotyrosine phosphatase and PLC via pertussis toxin insensitive as well as sensitive G proteins. Inhibits calcium entry by suppressing voltage-dependent calcium channels. Acts as the functionally dominant somatostatin receptor in pancreatic alpha- and beta-cells where it mediates the inhibitory effect of somatostatin-14 on hormone secretion. Inhibits cell growth through enhancement of MAPK1 and MAPK2 phosphorylation and subsequent up-regulation of CDKN1B. Stimulates neuronal migration and axon outgrowth and may participate in neuron development and maturation during brain development. Mediates negative regulation of insulin receptor signaling through PTPN6. Inactivates SSTR3 receptor function following heterodimerization. This Mus musculus (Mouse) protein is Somatostatin receptor type 2 (Sstr2).